The sequence spans 1185 residues: MSMFLKTIEIKGFKSFADKTELIFTGGITSIVGPNGSGKSNISDAVRWVLGEQSVKTLRGGKMEDVIFAGTQFRKPLGLCQVSLTLDNEDKKLSLEYSNITVSRRLYRSGESEYYINNVQCRLRDIHELFMDTGIGREGYSIIGQGRIDALLSGKQEDRRLLLEEAAGIVKFRWRRSEAEKKLENTEVNLIRIEDILHTYEERLKPLELENKKADEFLRLSEELKDKEKTVLIYSLKKIQHKIDKLESSMERITSSNRESHLELTKLREDVNGYNIRMENIMDESTRCEKDYYDKRELINQGENKIKLLKQKIEDLEDNIKRNYLELKQIENDKIKKSEGITLQNQNLLELKNREKEVNIGILDYENNIKKIEKDIYSRENICKKLKEDKIQYFSNISKLRNHIISIKKDGENIVEKIDKLKSSYESYSKAIIISSEKKNKLLGEISNIKKNISVYQNKIDENNSGILELTNVLNLKENSLQKLNALYNTLEANYKMLVNFHKHYEGYNRTVKALMENIKNHKLDVPAQSCFLVGEIISLQKKFETCIEISLGNSISSVITNNEIIAKIIIKYLKDNKMGRATFLPISIIKGRKISNLHKFEDIKGFIGVASELVSYSKEFKDVLDYILGRTIICENIDNAFEIAKLAEYSFKIVTLSGDVVNSGGAITGGSLQKRSSNIIGRKREIEETLVKIENTKETLQVLNGDIRRIKSDKEKLHCQNEDFKEKIHLDNIELTKLHQQNDTIERETKKLIESRETANREIKLLYKNKEVNLNELQEEEKKLKEYSKEEIKNDDYILKMEEELKEGRNRITDLKEGLTSLKVKRAQISENILSSERELSRLDQEIKSMDIKNRSIVEEIKLSEKIIHKNELNMYSNEKEVKDLKQYMEKLQESIEKSHVKTIELKQKINVSNEKVDNLTLIINKKETSFHKIQLELTKLNSQKDNIYSRLKEDMNITCDGDIEYDVQIENLEEYKSKIVHLKSSISKLGVVNLGAIEEYKNLQKKITFLSSQKEDLIKSKQELKKVIDAMTEKMKGVFKENFVKLKKNFNDTFRELFKGGSADLVLTKGDELTGNIDITVQPPGKKLQNINLMSGGEKGLSAIALLFAMLKIKPTPFCILDEIEASLDDANVLRYAEFLRKFSRDTQFIVITHRKGTMEVSDVLYGVTMEEKGVSKIISLKL.

34 to 41 (PNGSGKSN) contributes to the ATP binding site. Coiled-coil stretches lie at residues 174–376 (WRRS…EKDI) and 412–526 (ENIV…KLDV). Residues 534–644 (VGEIISLQKK…CENIDNAFEI (111 aa)) form the SMC hinge domain. Positions 679–1039 (NIIGRKREIE…IDAMTEKMKG (361 aa)) form a coiled coil.

It belongs to the SMC family. Homodimer.

It is found in the cytoplasm. Required for chromosome condensation and partitioning. The sequence is that of Chromosome partition protein Smc from Clostridium kluyveri (strain NBRC 12016).